A 139-amino-acid polypeptide reads, in one-letter code: Large-conductance mechanosensitive channel 1 (139 aa).

3 helical membrane passes run 8–28 (FISK…AAFG), 30–50 (IVDS…FGGL), and 81–101 (GSFI…FLMV).

It belongs to the MscL family. In terms of assembly, homopentamer.

It is found in the cell inner membrane. Functionally, channel that opens in response to stretch forces in the membrane lipid bilayer. May participate in the regulation of osmotic pressure changes within the cell. In Mesorhizobium japonicum (strain LMG 29417 / CECT 9101 / MAFF 303099) (Mesorhizobium loti (strain MAFF 303099)), this protein is Large-conductance mechanosensitive channel 1.